We begin with the raw amino-acid sequence, 346 residues long: Holliday junction branch migration complex subunit RuvB (346 aa).

Residues 1 to 182 (MSEPARLISP…FGIPVRLSFY (182 aa)) form a large ATPase domain (RuvB-L) region. Residues Leu21, Arg22, Gly63, Lys66, Thr67, Thr68, 129–131 (EDF), Arg172, Tyr182, and Arg219 contribute to the ATP site. A Mg(2+)-binding site is contributed by Thr67. A small ATPAse domain (RuvB-S) region spans residues 183–253 (TVEELELIVR…IADEALTRLL (71 aa)). Residues 256–346 (NVGFDQLDKR…AQFRLFQEDN (91 aa)) form a head domain (RuvB-H) region. Arg292, Arg311, and Arg316 together coordinate DNA.

The protein belongs to the RuvB family. In terms of assembly, homohexamer. Forms an RuvA(8)-RuvB(12)-Holliday junction (HJ) complex. HJ DNA is sandwiched between 2 RuvA tetramers; dsDNA enters through RuvA and exits via RuvB. An RuvB hexamer assembles on each DNA strand where it exits the tetramer. Each RuvB hexamer is contacted by two RuvA subunits (via domain III) on 2 adjacent RuvB subunits; this complex drives branch migration. In the full resolvosome a probable DNA-RuvA(4)-RuvB(12)-RuvC(2) complex forms which resolves the HJ.

Its subcellular location is the cytoplasm. The enzyme catalyses ATP + H2O = ADP + phosphate + H(+). Its function is as follows. The RuvA-RuvB-RuvC complex processes Holliday junction (HJ) DNA during genetic recombination and DNA repair, while the RuvA-RuvB complex plays an important role in the rescue of blocked DNA replication forks via replication fork reversal (RFR). RuvA specifically binds to HJ cruciform DNA, conferring on it an open structure. The RuvB hexamer acts as an ATP-dependent pump, pulling dsDNA into and through the RuvAB complex. RuvB forms 2 homohexamers on either side of HJ DNA bound by 1 or 2 RuvA tetramers; 4 subunits per hexamer contact DNA at a time. Coordinated motions by a converter formed by DNA-disengaged RuvB subunits stimulates ATP hydrolysis and nucleotide exchange. Immobilization of the converter enables RuvB to convert the ATP-contained energy into a lever motion, pulling 2 nucleotides of DNA out of the RuvA tetramer per ATP hydrolyzed, thus driving DNA branch migration. The RuvB motors rotate together with the DNA substrate, which together with the progressing nucleotide cycle form the mechanistic basis for DNA recombination by continuous HJ branch migration. Branch migration allows RuvC to scan DNA until it finds its consensus sequence, where it cleaves and resolves cruciform DNA. The polypeptide is Holliday junction branch migration complex subunit RuvB (Rhizobium leguminosarum bv. trifolii (strain WSM2304)).